The chain runs to 255 residues: Bouquet formation protein 3 (255 aa).

The next 8 helical transmembrane spans lie at 13 to 33, 48 to 68, 72 to 94, 99 to 116, 132 to 152, 172 to 192, 205 to 225, and 235 to 255; these read IKVS…NYHL, IPYW…LLLQ, LGYG…YYLT, IAWA…ARCF, YSVS…LNYI, SLVA…GYVI, SLFL…SILF, and VVGA…ALSL.

It localises to the endoplasmic reticulum membrane. Its subcellular location is the nucleus inner membrane. Functionally, connects telomeres to the nuclear envelop (NE) during both vegetative growth and meiosis. This connection ensures clustering of telomeres to the spindle pole body (SPB) when cells enter meiotic prophase. This chain is Bouquet formation protein 3 (bqt3), found in Schizosaccharomyces pombe (strain 972 / ATCC 24843) (Fission yeast).